The sequence spans 645 residues: Cyclin-D-binding Myb-like transcription factor 1 (645 aa).

Disordered regions lie at residues 34–71 (QNDG…STEY) and 95–119 (RDEE…KKGE). Composition is skewed to acidic residues over residues 36-46 (DGEDLGSDETT) and 95-105 (RDEELESDDLS). The Myb-like 1 domain maps to 219–257 (GKYTDEEINKLKELRQKHGNDWATIGSALGRSASSVKDR). Positions 262 to 327 (KDTCNTGKWT…KWLNYLNWKQ (66 aa)) constitute an HTH myb-type domain. The segment at residues 300 to 323 (WASVAELVGTRSEKQCRSKWLNYL) is a DNA-binding region (H-T-H motif). The 50-residue stretch at 333-382 (WTKEDDINLVRRIAELEVEDENEINWDILASGWSSVRSPQWLRSKWWTIK) folds into the Myb-like 2 domain. The tract at residues 568–645 (VKEEPSENQT…ILENQEEGSN (78 aa)) is disordered. The span at 587-597 (EQSKQGEKTLD) shows a compositional bias: basic and acidic residues. Polar residues predominate over residues 615–625 (IPTNEDISSDS).

The protein belongs to the DMTF1 family.

The protein localises to the nucleus. Functionally, transcriptional activator which activates the CDKN2A/ARF locus in response to Ras-Raf signaling, thereby promoting p53/TP53-dependent growth arrest. Binds to the consensus sequence 5'-CCCG[GT]ATGT-3'. This is Cyclin-D-binding Myb-like transcription factor 1 (dmtf1) from Danio rerio (Zebrafish).